Here is a 234-residue protein sequence, read N- to C-terminus: MAENHCELLSPARGGIGAGLGGGLCRRCSAGLGALAQRPGSVSKWVRLNVGGTYFLTTRQTLCRDPKSFLYRLCQADPDLDSDKDETGAYLIDRDPTYFGPVLNYLRHGKLVINKDLAEEGVLEEAEFYNITSLIKLVKDKIRERDSKTSQVPVKHVYRVLQCQEEELTQMVSTMSDGWKFEQLVSIGSSYNYGNEDQAEFLCVVSKELHNTPYGTASEPSEKAKILQERGSRM.

The residue at position 2 (A2) is an N-acetylalanine. The residue at position 10 (S10) is a Phosphoserine. One can recognise a BTB domain in the interval 44–146 (KWVRLNVGGT…LVKDKIRERD (103 aa)). The disordered stretch occupies residues 213-234 (PYGTASEPSEKAKILQERGSRM). Over residues 220–234 (PSEKAKILQERGSRM) the composition is skewed to basic and acidic residues.

As to quaternary structure, homopentamer. Interacts (via C-terminus) with GRASP55/GORASP2. Interacts with CUL3 and with ubiquitinated proteins. Interacts with CRY1. In terms of assembly, (Microbial infection) Interacts with adeno-associated virus 2 (AAV-2) REP proteins.

It localises to the cytoplasm. Its subcellular location is the cytosol. The protein resides in the nucleus. Functionally, its interaction with CUL3 suggests that it may act as a substrate adapter in some E3 ligase complex. Does not affect the function of Kv channel Kv2.1/KCNB1, Kv1.2/KCNA2, Kv4.2/KCND2 and Kv3.4/KCNC4. In Homo sapiens (Human), this protein is BTB/POZ domain-containing protein KCTD5 (KCTD5).